We begin with the raw amino-acid sequence, 69 residues long: Small ribosomal subunit protein bS21 (69 aa).

Belongs to the bacterial ribosomal protein bS21 family.

The protein is Small ribosomal subunit protein bS21 of Borrelia duttonii (strain Ly).